The primary structure comprises 387 residues: Succinate--CoA ligase [ADP-forming] subunit beta (387 aa).

An ATP-grasp domain is found at 9–244 (KHILSKFGVN…YDEEIKEEIE (236 aa)). ATP contacts are provided by residues K46, 53 to 55 (GRG), E99, C102, and E107. N199 and D213 together coordinate Mg(2+). Residues N264 and 321–323 (GIM) contribute to the substrate site.

The protein belongs to the succinate/malate CoA ligase beta subunit family. As to quaternary structure, heterotetramer of two alpha and two beta subunits. Mg(2+) is required as a cofactor.

The enzyme catalyses succinate + ATP + CoA = succinyl-CoA + ADP + phosphate. It carries out the reaction GTP + succinate + CoA = succinyl-CoA + GDP + phosphate. It functions in the pathway carbohydrate metabolism; tricarboxylic acid cycle; succinate from succinyl-CoA (ligase route): step 1/1. Succinyl-CoA synthetase functions in the citric acid cycle (TCA), coupling the hydrolysis of succinyl-CoA to the synthesis of either ATP or GTP and thus represents the only step of substrate-level phosphorylation in the TCA. The beta subunit provides nucleotide specificity of the enzyme and binds the substrate succinate, while the binding sites for coenzyme A and phosphate are found in the alpha subunit. This is Succinate--CoA ligase [ADP-forming] subunit beta from Ehrlichia chaffeensis (strain ATCC CRL-10679 / Arkansas).